Reading from the N-terminus, the 398-residue chain is Acetate kinase (398 aa).

Residue asparagine 7 participates in Mg(2+) binding. Lysine 14 provides a ligand contact to ATP. Substrate is bound at residue arginine 91. The active-site Proton donor/acceptor is the aspartate 148. ATP is bound by residues histidine 208–glycine 212, aspartate 283–arginine 285, and glycine 331–asparagine 335. Glutamate 384 contributes to the Mg(2+) binding site.

The protein belongs to the acetokinase family. In terms of assembly, homodimer. Mg(2+) serves as cofactor. Mn(2+) is required as a cofactor.

It is found in the cytoplasm. The catalysed reaction is acetate + ATP = acetyl phosphate + ADP. The protein operates within metabolic intermediate biosynthesis; acetyl-CoA biosynthesis; acetyl-CoA from acetate: step 1/2. Functionally, catalyzes the formation of acetyl phosphate from acetate and ATP. Can also catalyze the reverse reaction. This is Acetate kinase from Phocaeicola vulgatus (strain ATCC 8482 / DSM 1447 / JCM 5826 / CCUG 4940 / NBRC 14291 / NCTC 11154) (Bacteroides vulgatus).